The following is a 108-amino-acid chain: uncharacterized protein (108 aa).

Positions 1-108 are disordered; it reads MAKVTSEPQK…DKEQSETSVL (108 aa). A compositionally biased stretch (basic residues) spans 26 to 56; it reads KGRKKGKTPRQRRSRSGVKGLKTTRKAKRPL. Residues 58 to 70 show a composition bias toward polar residues; it reads GSSSQKAGETNTP. Over residues 73 to 92 the composition is skewed to basic residues; sequence KPKKARGPILRGRYHRLKEK. Residues 93 to 108 show a composition bias toward basic and acidic residues; it reads MKKEEADKEQSETSVL.

This is an uncharacterized protein from Homo sapiens (Human).